The primary structure comprises 542 residues: Chloride channel CLIC-like protein 1 (542 aa).

An N-terminal signal peptide occupies residues 1 to 18; that stretch reads MLYSLLLCECLWLITAYA. At 19-184 the chain is on the lumenal side; that stretch reads HDDEWIDPTD…EEFFGVDPYN (166 aa). A helical membrane pass occupies residues 185–205; sequence VFMVLLCLLCIVALVATELWT. At 206 to 216 the chain is on the cytoplasmic side; sequence YVRWYTQLKRV. Residues 217–237 traverse the membrane as a helical segment; it reads FFISFLISLGWNWMYLYKLAF. Residues 238 to 329 lie on the Lumenal side of the membrane; the sequence is AQHQAEVAKM…GEFIKALMKE (92 aa). A helical transmembrane segment spans residues 330 to 350; that stretch reads IPVLLHIPVLIIMALAVLSFC. The Cytoplasmic segment spans residues 351-542; sequence YGAGKSVNML…PASTAVEVCG (192 aa). The segment at 369-394 is disordered; sequence EAPQALQAGERRRQQKIDYRPHGGAG. A compositionally biased stretch (basic and acidic residues) spans 377–389; the sequence is GERRRQQKIDYRP. 2 positions are modified to phosphoserine: Ser-438 and Ser-464. The disordered stretch occupies residues 452–542; it reads AREHPKVVPG…PASTAVEVCG (91 aa). Residues 480–491 show a composition bias toward low complexity; that stretch reads ESTPTESSTESS. Thr-482 is subject to Phosphothreonine. The residue at position 532 (Ser-532) is a Phosphoserine.

It belongs to the chloride channel MCLC family. As to quaternary structure, homomultimers. Interacts with mitochondrial protein PIGBOS1 (via C-terminus); the interaction occurs at the mitochondria-associated endoplasmic reticulum (ER) membrane, a zone of contact between the ER and mitochondrial membranes, but does not appear to play a role in ER-mitochondria tethering and is not affected by ER stress. Interacts with CALR.

It is found in the endoplasmic reticulum membrane. The enzyme catalyses chloride(in) = chloride(out). It carries out the reaction bromide(in) = bromide(out). The catalysed reaction is nitrate(in) = nitrate(out). It catalyses the reaction fluoride(in) = fluoride(out). Functionally, anion-selective channel with Ca(2+)-dependent and voltage-independent gating. Permeable to small monovalent anions with selectivity for bromide &gt; chloride &gt; nitrate &gt; fluoride. Operates in the endoplasmic reticulum (ER) membrane where it mediates chloride efflux to compensate for the loss of positive charges from the ER lumen upon Ca(2+) release. Contributes to the maintenance of ER Ca(2+) pools and activation of unfolded protein response to prevent accumulation of misfolded proteins in the ER lumen. Particularly involved in ER homeostasis mechanisms underlying motor neurons and retinal photoreceptors survival. The sequence is that of Chloride channel CLIC-like protein 1 (CLCC1) from Bos taurus (Bovine).